A 1035-amino-acid chain; its full sequence is Enteropeptidase (1035 aa).

Residue Gly2 is the site of N-myristoyl glycine attachment. Residues 2–18 (GSKRSVPSRHRSLTTYE) are Cytoplasmic-facing. The chain crosses the membrane as a helical; Signal-anchor for type II membrane protein span at residues 19-47 (VMFAVLFVILVALCAGLIAVSWLSIQGSV). Topologically, residues 48-1035 (KDAAFGKSHE…FTEWIQSFLH (988 aa)) are extracellular. The 116-residue stretch at 54 to 169 (KSHEARGTLK…NSIDITASLE (116 aa)) folds into the SEA domain. 4 N-linked (GlcNAc...) asparagine glycosylation sites follow: Asn116, Asn147, Asn170, and Asn194. The LDL-receptor class A 1 domain maps to 197–238 (IECPPDSRLCADALKCIAIDLFCDGELNCPDGSDEDNKTCAT). 4 cysteine pairs are disulfide-bonded: Cys199/Cys212, Cys206/Cys225, Cys219/Cys236, and Cys240/Cys269. 9 N-linked (GlcNAc...) asparagine glycosylation sites follow: Asn233, Asn263, Asn264, Asn404, Asn456, Asn486, Asn519, Asn550, and Asn646. The CUB 1 domain occupies 240–350 (CDGRFLLTGS…IGFKVTYTAF (111 aa)). The MAM domain maps to 358 to 520 (YEKINCNFED…ISLTYGICNV (163 aa)). The cysteines at positions 540 and 568 are disulfide-linked. The CUB 2 domain maps to 540–650 (CGGPHDLWEP…QGFKANFTTG (111 aa)). The 39-residue stretch at 657–695 (EPCKEDNFQCKDGECIPLVNLCDGFPHCKDGSDEAHCVR) folds into the LDL-receptor class A 2 domain. 3 disulfides stabilise this stretch: Cys659/Cys671, Cys666/Cys684, and Cys678/Cys693. An SRCR domain is found at 694–787 (VRLFNGTTDS…LILLQCNYKS (94 aa)). Asn698, Asn722, Asn741, and Asn762 each carry an N-linked (GlcNAc...) asparagine glycan. Intrachain disulfides connect Cys773-Cys783, Cys788-Cys912, Cys826-Cys842, Cys926-Cys993, Cys957-Cys972, and Cys983-Cys1011. Residues 801-1035 (IVGGSDSREG…FTEWIQSFLH (235 aa)) form the Peptidase S1 domain. The active-site Charge relay system is the His841. The N-linked (GlcNAc...) asparagine glycan is linked to Asn864. Asp892 (charge relay system) is an active-site residue. N-linked (GlcNAc...) asparagine glycans are attached at residues Asn903 and Asn965. Ser987 functions as the Charge relay system in the catalytic mechanism.

This sequence belongs to the peptidase S1 family. As to quaternary structure, heterodimer of a catalytic (light) chain and a multidomain (heavy) chain linked by a disulfide bond. Post-translationally, the chains are derived from a single precursor that is cleaved by a trypsin-like protease. Intestinal brush border.

Its subcellular location is the membrane. It catalyses the reaction Activation of trypsinogen by selective cleavage of 6-Lys-|-Ile-7 bond.. Responsible for initiating activation of pancreatic proteolytic proenzymes (trypsin, chymotrypsin and carboxypeptidase A). It catalyzes the conversion of trypsinogen to trypsin which in turn activates other proenzymes including chymotrypsinogen, procarboxypeptidases, and proelastases. The chain is Enteropeptidase (TMPRSS15) from Bos taurus (Bovine).